The chain runs to 128 residues: Light-regulated protein, chloroplastic (128 aa).

2 tandem repeats follow at residues 58 to 72 and 111 to 125. Positions 58 to 125 are 2 X 15 AA approximate repeats; it reads VFPMEACDLI…ACDDLGGEFC (68 aa).

Component of high molecular weight thylakoid LFNRs-containing protein complexes containing LIR1, LFNR1, LFNR2, TIC62 and TROL proteins. Interacts directly with LFNR1 and LFNR2; LIR1 increases the affinity of LFNR1 and LFNR2 for TIC62 and subsequent thylakoid relocalization. Post-translationally, may form interchain disulfide bonds with LFNR1 and LFNR2.

The protein localises to the plastid. It is found in the chloroplast thylakoid membrane. It localises to the chloroplast envelope. The protein resides in the chloroplast stroma. Thylakoid-determinant subunit of high molecular weight LFNRs-containing protein complexes. The sequence is that of Light-regulated protein, chloroplastic (LIR1) from Oryza sativa subsp. japonica (Rice).